Here is a 338-residue protein sequence, read N- to C-terminus: UPF0194 membrane protein in asrC 5'region (338 aa).

Residues 1–23 (MAISPKKRALALVVVLIVAGAVA) form the signal peptide. Residues 148-207 (KQSLDNAAAALKTARANLDRAQQALTLAIKGPRKEDIAAARQQLQADKAGLSLARRELTD) are a coiled coil.

It belongs to the UPF0194 family.

It localises to the periplasm. The chain is UPF0194 membrane protein in asrC 5'region from Acidithiobacillus ferridurans.